A 618-amino-acid chain; its full sequence is Chaperone protein HscA homolog (618 aa).

The protein belongs to the heat shock protein 70 family.

In terms of biological role, chaperone involved in the maturation of iron-sulfur cluster-containing proteins. Has a low intrinsic ATPase activity which is markedly stimulated by HscB. The chain is Chaperone protein HscA homolog from Methylibium petroleiphilum (strain ATCC BAA-1232 / LMG 22953 / PM1).